A 119-amino-acid polypeptide reads, in one-letter code: T cell receptor alpha variable 29/delta variable 5 (119 aa).

Positions 1–21 (MAMLLGASVLILWLQPDWVNS) are cleaved as a signal peptide. Positions 22–119 (QQKNDDQQVK…DSAVYFCAAS (98 aa)) constitute an Ig-like domain. A disulfide bond links cysteine 49 and cysteine 116. N-linked (GlcNAc...) asparagine glycosylation occurs at asparagine 93.

As to quaternary structure, alpha-beta TR is a heterodimer composed of an alpha and beta chain; disulfide-linked. The alpha-beta TR is associated with the transmembrane signaling CD3 coreceptor proteins to form the TR-CD3 (TcR or TCR). The assembly of alpha-beta TR heterodimers with CD3 occurs in the endoplasmic reticulum where a single alpha-beta TR heterodimer associates with one CD3D-CD3E heterodimer, one CD3G-CD3E heterodimer and one CD247 homodimer forming a stable octameric structure. CD3D-CD3E and CD3G-CD3E heterodimers preferentially associate with TR alpha and TR beta chains, respectively. The association of the CD247 homodimer is the last step of TcR assembly in the endoplasmic reticulum and is required for transport to the cell surface.

Its subcellular location is the cell membrane. In terms of biological role, v region of the variable domain of T cell receptor (TR) alpha chain that participates in the antigen recognition. Alpha-beta T cell receptors are antigen specific receptors which are essential to the immune response and are present on the cell surface of T lymphocytes. Recognize peptide-major histocompatibility (MH) (pMH) complexes that are displayed by antigen presenting cells (APC), a prerequisite for efficient T cell adaptive immunity against pathogens. Binding of alpha-beta TR to pMH complex initiates TR-CD3 clustering on the cell surface and intracellular activation of LCK that phosphorylates the ITAM motifs of CD3G, CD3D, CD3E and CD247 enabling the recruitment of ZAP70. In turn ZAP70 phosphorylates LAT, which recruits numerous signaling molecules to form the LAT signalosome. The LAT signalosome propagates signal branching to three major signaling pathways, the calcium, the mitogen-activated protein kinase (MAPK) kinase and the nuclear factor NF-kappa-B (NF-kB) pathways, leading to the mobilization of transcription factors that are critical for gene expression and essential for T cell growth and differentiation. The T cell repertoire is generated in the thymus, by V-(D)-J rearrangement. This repertoire is then shaped by intrathymic selection events to generate a peripheral T cell pool of self-MH restricted, non-autoaggressive T cells. Post-thymic interaction of alpha-beta TR with the pMH complexes shapes TR structural and functional avidity. In Homo sapiens (Human), this protein is T cell receptor alpha variable 29/delta variable 5.